The chain runs to 343 residues: Anthranilate phosphoribosyltransferase (343 aa).

Residues Gly-84, 87–88 (GD), Thr-92, 94–97 (NIST), 112–120 (KHGNRGVSS), and Ser-124 each bind 5-phospho-alpha-D-ribose 1-diphosphate. Position 84 (Gly-84) interacts with anthranilate. Ser-96 is a Mg(2+) binding site. Position 115 (Asn-115) interacts with anthranilate. An anthranilate-binding site is contributed by Arg-170. Residues Asp-229 and Glu-230 each contribute to the Mg(2+) site.

Belongs to the anthranilate phosphoribosyltransferase family. Homodimer. Requires Mg(2+) as cofactor.

It catalyses the reaction N-(5-phospho-beta-D-ribosyl)anthranilate + diphosphate = 5-phospho-alpha-D-ribose 1-diphosphate + anthranilate. The protein operates within amino-acid biosynthesis; L-tryptophan biosynthesis; L-tryptophan from chorismate: step 2/5. Functionally, catalyzes the transfer of the phosphoribosyl group of 5-phosphorylribose-1-pyrophosphate (PRPP) to anthranilate to yield N-(5'-phosphoribosyl)-anthranilate (PRA). In Burkholderia thailandensis (strain ATCC 700388 / DSM 13276 / CCUG 48851 / CIP 106301 / E264), this protein is Anthranilate phosphoribosyltransferase.